The primary structure comprises 367 residues: Queuine tRNA-ribosyltransferase (367 aa).

Aspartate 91 functions as the Proton acceptor in the catalytic mechanism. Residues 91 to 95 (DSGGF), aspartate 145, glutamine 188, and glycine 215 contribute to the substrate site. The active-site Nucleophile is aspartate 265. Residues 270-274 (TRVAR) form an RNA binding; important for wobble base 34 recognition region. Residues cysteine 303, cysteine 305, cysteine 308, and histidine 334 each coordinate Zn(2+).

This sequence belongs to the queuine tRNA-ribosyltransferase family. Homodimer. Within each dimer, one monomer is responsible for RNA recognition and catalysis, while the other monomer binds to the replacement base PreQ1. The cofactor is Zn(2+).

It catalyses the reaction 7-aminomethyl-7-carbaguanine + guanosine(34) in tRNA = 7-aminomethyl-7-carbaguanosine(34) in tRNA + guanine. Its pathway is tRNA modification; tRNA-queuosine biosynthesis. Functionally, catalyzes the base-exchange of a guanine (G) residue with the queuine precursor 7-aminomethyl-7-deazaguanine (PreQ1) at position 34 (anticodon wobble position) in tRNAs with GU(N) anticodons (tRNA-Asp, -Asn, -His and -Tyr). Catalysis occurs through a double-displacement mechanism. The nucleophile active site attacks the C1' of nucleotide 34 to detach the guanine base from the RNA, forming a covalent enzyme-RNA intermediate. The proton acceptor active site deprotonates the incoming PreQ1, allowing a nucleophilic attack on the C1' of the ribose to form the product. After dissociation, two additional enzymatic reactions on the tRNA convert PreQ1 to queuine (Q), resulting in the hypermodified nucleoside queuosine (7-(((4,5-cis-dihydroxy-2-cyclopenten-1-yl)amino)methyl)-7-deazaguanosine). The polypeptide is Queuine tRNA-ribosyltransferase (Thermosipho africanus (strain TCF52B)).